We begin with the raw amino-acid sequence, 674 residues long: Acyl-coenzyme A oxidase acox-1.1 (674 aa).

FAD is bound by residues 149 to 152 (YAQT), 157 to 158 (GT), and glycine 191. Substrate-binding positions include 285-288 (KINY) and arginine 295. Residues arginine 320 and 340 to 343 (QQHR) each bind FAD. Positions 342, 392, 396, and 404 each coordinate ATP. Glycine 411 lines the FAD pocket. 433-434 (YE) is a binding site for substrate. Glutamate 434 functions as the Proton acceptor in the catalytic mechanism. Residue glutamate 436 participates in FAD binding. Residues 533–536 (RASR) and tyrosine 581 contribute to the ATP site. The Microbody targeting signal motif lies at 672 to 674 (SKL).

The protein belongs to the acyl-CoA oxidase family. Homodimer. Forms a heterodimer with acox-1.2. Forms a heterodimer with acox-1.3; the interaction may be important for the stability of acox-1.3. Requires FAD as cofactor. As to expression, expressed in hypodermis and intestine.

It is found in the peroxisome. The catalysed reaction is nonanoyl-CoA + O2 = (2E)-nonenoyl-CoA + H2O2. It carries out the reaction dodecanoyl-CoA + O2 = (2E)-dodecenoyl-CoA + H2O2. It catalyses the reaction a 2,3-saturated acyl-CoA + O2 = a (2E)-enoyl-CoA + H2O2. The enzyme catalyses heptanoyl-CoA + O2 = (2E)-heptenoyl-CoA + H2O2. The catalysed reaction is (8R)-8-hydroxynonanoyl-CoA + O2 = (2E,8R)-8-hydroxynonenoyl-CoA + H2O2. It carries out the reaction pentanoyl-CoA + O2 = (2E)-pentenoyl-CoA + H2O2. It catalyses the reaction hexadecanoyl-CoA + O2 = (2E)-hexadecenoyl-CoA + H2O2. The enzyme catalyses IC-asc-C7-CoA + O2 = IC-asc-DeltaC7-CoA + H2O2. The catalysed reaction is IC-asc-C9-CoA + O2 = IC-asc-DeltaC9-CoA + H2O2. It carries out the reaction asc-omegaC5-CoA + O2 = asc-omegaDeltaC5-CoA + H2O2. It catalyses the reaction asc-C7-CoA + O2 = asc-DeltaC7-CoA + H2O2. The enzyme catalyses asc-omegaC7-CoA + O2 = asc-omegaDeltaC7-CoA + H2O2. The catalysed reaction is asc-C9-CoA + O2 = asc-DeltaC9-CoA + H2O2. It carries out the reaction asc-C13-CoA + O2 = asc-DeltaC13-CoA + H2O2. It participates in lipid metabolism; peroxisomal fatty acid beta-oxidation. Its activity is regulated as follows. Activated by ATP. ATP binding leads to a conformational change that promotes FAD cofactor binding and enzyme activity. ATP binding likely occurs during acox-1.1 folding and/or dimer formation. In terms of biological role, involved in the first step of peroxisomal beta-oxidation by catalyzing the desaturation of fatty acid-derived side chains. Specifically, catalyzes the desaturation of fatty acids heptanoyl-CoA (C7), nonanoyl-CoA (C9), dodecanoyl-CoA (C12) and to a lesser extent pentanoyl-CoA (C5) and hexadecanoyl-CoA (C16), and hydroxylated fatty acid hydroxynonanoyl-CoA. Also, catalyzes the desaturation fatty acid-derived side chains of ascaroside pheromones, which regulates development and behavior. Specifically, shortens ascaroside with 5-carbon omega side chain (asc-omega-C5), 7-carbon side chain (asc-C7), 9-carbon side chain (asc-C9), 11-carbon side chain (asc-C11), 13-carbon side chain (asc-C13), 15-carbon side chain (asc-C15) and to a lesser extent ascarosides with 7-omega-carbon side chain (asc-omega-C7). Also shortens indol-3-carbonyl(IC)-ascarosides with 7-carbon side chain (IC-asc-C7) and to a lesser extent (IC)-ascarosides with 9-carbon side chain (IC-asc-C9). May associate and regulate the folding and/or the catalytic activity of other acyl-coenzyme A oxidases including acox-1.2, acox-1.3, acox-1.4 and acox-3 modulating the type of ascarosides produced. In association with acox-1.3, catalyzes the desaturation of asc-C7-CoA but not of fatty acids or hydroxylated fatty acids. Involved in the biosynthesis of asc-C6-MK (daumone 2) and asc-delta-C9 (daumone 3) but not asc-C7 (daumone 1); daumones are pheromones produced during unfavourable growth conditions which promote entry into the dauer stage. This Caenorhabditis elegans protein is Acyl-coenzyme A oxidase acox-1.1.